We begin with the raw amino-acid sequence, 432 residues long: D-amino acid dehydrogenase (432 aa).

Position 3–17 (3–17) interacts with FAD; the sequence is VVILGSGVVGVTSAW.

This sequence belongs to the DadA oxidoreductase family. The cofactor is FAD.

It carries out the reaction a D-alpha-amino acid + A + H2O = a 2-oxocarboxylate + AH2 + NH4(+). Its pathway is amino-acid degradation; D-alanine degradation; NH(3) and pyruvate from D-alanine: step 1/1. In terms of biological role, oxidative deamination of D-amino acids. This is D-amino acid dehydrogenase from Escherichia fergusonii (strain ATCC 35469 / DSM 13698 / CCUG 18766 / IAM 14443 / JCM 21226 / LMG 7866 / NBRC 102419 / NCTC 12128 / CDC 0568-73).